The chain runs to 342 residues: NADPH-dependent methylglyoxal reductase GRE2 (342 aa).

NADP(+) contacts are provided by residues G7–I12, R32, K36, D57–I58, Y165, K169, V199, and S216. Catalysis depends on K169, which acts as the Proton donor. S333 bears the Phosphoserine mark.

This sequence belongs to the NAD(P)-dependent epimerase/dehydratase family. Dihydroflavonol-4-reductase subfamily. As to quaternary structure, monomer. The N-terminus is blocked.

The protein resides in the cytoplasm. The protein localises to the nucleus. The catalysed reaction is (S)-lactaldehyde + NADP(+) = methylglyoxal + NADPH + H(+). The enzyme catalyses 3-methylbutanol + NADP(+) = 3-methylbutanal + NADPH + H(+). It catalyses the reaction 2,5-hexanedione + 2 NADPH + 2 H(+) = (2S,5S)-hexanediol + 2 NADP(+). It carries out the reaction (S)-3-chloro-1-phenyl-1-propanol + NADP(+) = 3-chloro-1-phenyl-1-propanone + NADPH + H(+). Its activity is regulated as follows. Activated by glutathione. Functionally, catalyzes the irreversible reduction of the cytotoxic compound methylglyoxal (MG, 2-oxopropanal) to (S)-lactaldehyde as an alternative to detoxification of MG by glyoxalase I GLO1. MG is synthesized via a bypath of glycolysis from dihydroxyacetone phosphate and is believed to play a role in cell cycle regulation and stress adaptation. Also catalyzes the reduction of 3-methylbutanal to 3-methylbutanol. Acts as a suppressor of 3-methylbutanol-induced filamentation by modulating the levels of 3-methylbutanal, the signal to which cells respond by filamentation. Also involved in ergosterol metabolism. This is NADPH-dependent methylglyoxal reductase GRE2 (GRE2) from Saccharomyces cerevisiae (strain ATCC 204508 / S288c) (Baker's yeast).